We begin with the raw amino-acid sequence, 117 residues long: Ribosome-binding factor A (117 aa).

This sequence belongs to the RbfA family. As to quaternary structure, monomer. Binds 30S ribosomal subunits, but not 50S ribosomal subunits or 70S ribosomes.

Its subcellular location is the cytoplasm. One of several proteins that assist in the late maturation steps of the functional core of the 30S ribosomal subunit. Associates with free 30S ribosomal subunits (but not with 30S subunits that are part of 70S ribosomes or polysomes). Required for efficient processing of 16S rRNA. May interact with the 5'-terminal helix region of 16S rRNA. The protein is Ribosome-binding factor A of Lactiplantibacillus plantarum (strain ATCC BAA-793 / NCIMB 8826 / WCFS1) (Lactobacillus plantarum).